The primary structure comprises 435 residues: ATP-dependent RNA helicase RhlB (435 aa).

The Q motif motif lies at 9–37 (QKFADLGLNPQVVEGLEKKGFEFCTPIQA). Positions 40–219 (LPVLLSGQDI…FEHMHNPEHV (180 aa)) constitute a Helicase ATP-binding domain. An ATP-binding site is contributed by 53 to 60 (AQTGTGKT). A DEAD box motif is present at residues 165 to 168 (DEAD). Residues 245-390 (ALLQTLIEEE…VSDYDSSALI (146 aa)) enclose the Helicase C-terminal domain. The segment at 395–435 (APVRTPSARNQQRRTNTGGARSGDRKSNNRRPRQPRQHKEA) is disordered. Residues 401 to 413 (SARNQQRRTNTGG) show a composition bias toward polar residues. Positions 422-435 (NNRRPRQPRQHKEA) are enriched in basic residues.

It belongs to the DEAD box helicase family. RhlB subfamily. In terms of assembly, component of the RNA degradosome, which is a multiprotein complex involved in RNA processing and mRNA degradation.

Its subcellular location is the cytoplasm. The enzyme catalyses ATP + H2O = ADP + phosphate + H(+). DEAD-box RNA helicase involved in RNA degradation. Has RNA-dependent ATPase activity and unwinds double-stranded RNA. The protein is ATP-dependent RNA helicase RhlB of Vibrio vulnificus (strain CMCP6).